A 138-amino-acid polypeptide reads, in one-letter code: Glia maturation factor (138 aa).

The region spanning 3–138 (DNQICDISNE…TEEWLKAKLK (136 aa)) is the ADF-H domain.

This sequence belongs to the actin-binding proteins ADF family. GMF subfamily. In ovaries, expressed in follicular epithelium, in polar cells, migrating border cells, and centripedal cells (at protein level).

The protein resides in the cell projection. It localises to the lamellipodium. Its subcellular location is the cytoplasm. The protein localises to the perinuclear region. It is found in the nucleus. The protein resides in the cell cortex. Its function is as follows. Inhibits Arp2/3-mediated actin nucleation. Together with flr, promotes Arp2/3-nucleated actin filament array disassembly. Promotes debranching. Regulates lamellipodial protrusion dynamics possibly by facilitating lamellipodial retraction. In egg chambers, enhances the retraction dynamics of cellular extensions in border cells and thus together with flr plays an important role in directional migration of border cell clusters. The protein is Glia maturation factor of Drosophila melanogaster (Fruit fly).